A 179-amino-acid chain; its full sequence is Large ribosomal subunit protein uL6 (179 aa).

It belongs to the universal ribosomal protein uL6 family. As to quaternary structure, part of the 50S ribosomal subunit.

Functionally, this protein binds to the 23S rRNA, and is important in its secondary structure. It is located near the subunit interface in the base of the L7/L12 stalk, and near the tRNA binding site of the peptidyltransferase center. The polypeptide is Large ribosomal subunit protein uL6 (Bacillus subtilis (strain 168)).